We begin with the raw amino-acid sequence, 239 residues long: Aspartate/glutamate leucyltransferase (239 aa).

It belongs to the R-transferase family. Bpt subfamily.

Its subcellular location is the cytoplasm. The enzyme catalyses N-terminal L-glutamyl-[protein] + L-leucyl-tRNA(Leu) = N-terminal L-leucyl-L-glutamyl-[protein] + tRNA(Leu) + H(+). The catalysed reaction is N-terminal L-aspartyl-[protein] + L-leucyl-tRNA(Leu) = N-terminal L-leucyl-L-aspartyl-[protein] + tRNA(Leu) + H(+). Functions in the N-end rule pathway of protein degradation where it conjugates Leu from its aminoacyl-tRNA to the N-termini of proteins containing an N-terminal aspartate or glutamate. The chain is Aspartate/glutamate leucyltransferase from Campylobacter jejuni (strain RM1221).